The sequence spans 538 residues: MKVFLVTCLGFAVFSSSVCVNINILQQIGYIKQQVRQLSYYSQSSSSYIVVKLLPNIQPTDNSCEFKSVTQYNKTLSNLLLPIAENINNIASPSSGSRRHKRFAGIAIGIAALGVATAAQVTAAVSLVQAQTNARAIAAMKNSIQATNRAVFEVKEGTQRLAIAVQAIQDHINTIMNTQLNNMSCQILDNQLATSLGLYLTELTTVFQPQLINPALSPISIQALRSLLGSMTPAVVQATLSTSISAAEILSAGLMEGQIVSVLLDEMQMIVKINIPTIVTQSNALVIDFYSISSFINNQESIIQLPDRILEIGNEQWSYPAKNCKLTRHHIFCQYNEAERLSLESKLCLAGNISACVFSPIAGSYMRRFVALDGTIVANCRSLTCLCKSPSYPIYQPDHHAVTTIDLTACQTLSLDGLDFSIVSLSNITYAENLTISLSQTINTQPIDISTELSKVNASLQNAVKYIKESNHQLQSVNVNSKIGAIIVAALVLSILSIIISLLFCCWAYVATKEIRRINFKTNHINTISSSVDDLIRY.

A signal peptide spans 1-19 (MKVFLVTCLGFAVFSSSVC). Residues 20–486 (VNINILQQIG…VNVNSKIGAI (467 aa)) lie on the Extracellular side of the membrane. 2 N-linked (GlcNAc...) asparagine; by host glycosylation sites follow: N56 and N73. A fusion peptide region spans residues 103 to 127 (FAGIAIGIAALGVATAAQVTAAVSL). Positions 128-156 (VQAQTNARAIAAMKNSIQATNRAVFEVKE) form a coiled coil. N182 carries an N-linked (GlcNAc...) asparagine; by host glycan. 4 disulfides stabilise this stretch: C324/C333, C348/C356, C380/C385, and C387/C410. N352 carries N-linked (GlcNAc...) asparagine; by host glycosylation. N-linked (GlcNAc...) asparagine; by host glycans are attached at residues N427, N433, and N457. Residues 452 to 477 (ELSKVNASLQNAVKYIKESNHQLQSV) adopt a coiled-coil conformation. The chain crosses the membrane as a helical span at residues 487-507 (IVAALVLSILSIIISLLFCCW). Topologically, residues 508–538 (AYVATKEIRRINFKTNHINTISSSVDDLIRY) are cytoplasmic.

Belongs to the paramyxoviruses fusion glycoprotein family. As to quaternary structure, homotrimer; disulfide-linked F1-F2. Interacts with host LAMP1; LAMP2 and LAMP3; these interactions promote the cleavage of the viral fusion protein F. The inactive precursor F0 is glycosylated and proteolytically cleaved into F1 and F2 to be functionally active. The cleavage is mediated by cellular proteases including host FURIN during the transport and maturation of the polypeptide.

It is found in the virion membrane. It localises to the host cell membrane. Class I viral fusion protein. Under the current model, the protein has at least 3 conformational states: pre-fusion native state, pre-hairpin intermediate state, and post-fusion hairpin state. During viral and plasma cell membrane fusion, the heptad repeat (HR) regions assume a trimer-of-hairpins structure, positioning the fusion peptide in close proximity to the C-terminal region of the ectodomain. The formation of this structure appears to drive apposition and subsequent fusion of viral and plasma cell membranes. Directs fusion of viral and cellular membranes leading to delivery of the nucleocapsid into the cytoplasm. This fusion is pH independent and occurs directly at the outer cell membrane. The trimer of F1-F2 (F protein) probably interacts with HN at the virion surface. Upon HN binding to its cellular receptor, the hydrophobic fusion peptide is unmasked and interacts with the cellular membrane, inducing the fusion between cell and virion membranes. Later in infection, F proteins expressed at the plasma membrane of infected cells could mediate fusion with adjacent cells to form syncytia, a cytopathic effect that could lead to tissue necrosis. This Mumps virus genotype B (strain Miyahara vaccine) (MuV) protein is Fusion glycoprotein F0 (F).